The primary structure comprises 318 residues: Taste receptor type 2 member 7 (318 aa).

Residues 1-9 are Extracellular-facing; it reads MTDKVQTTL. The chain crosses the membrane as a helical span at residues 10 to 30; sequence LFLAIGEFSVGILGNAFIGLV. The Cytoplasmic segment spans residues 31–55; it reads NCMDWVKKRKIASIDLILTSLAISR. The helical transmembrane segment at 56 to 76 threads the bilayer; that stretch reads ICLLCVILLDCFMLVLYPDVY. The Extracellular portion of the chain corresponds to 77–94; the sequence is ATGKQMRIIDFFWTLTNH. A helical transmembrane segment spans residues 95–115; sequence LSIWFATCLSIYYFFKIANFF. The Cytoplasmic portion of the chain corresponds to 116–128; that stretch reads HPLFLWMKWRIDR. Residues 129 to 149 form a helical membrane-spanning segment; it reads VISWILLGCMVLSVFINLPAT. Residues 150-187 lie on the Extracellular side of the membrane; that stretch reads ENLNADFRRCVKAKRKTNLTWSCRVTKAQHASTKLFLN. Residue Asn-167 is glycosylated (N-linked (GlcNAc...) asparagine). Residues 188–208 form a helical membrane-spanning segment; the sequence is LVTLLPFSVCLMSFFLLILSL. The Cytoplasmic portion of the chain corresponds to 209-235; that stretch reads WRHIRRMQLSATGCRDPSTEAHVRALK. A helical membrane pass occupies residues 236-256; sequence AVISFLLLFIAYYLSFLIATS. Topologically, residues 257–266 are extracellular; that stretch reads SYFIPETELA. The helical transmembrane segment at 267 to 287 threads the bilayer; the sequence is VIFGEFIALIYPSSHSFILIL. The Cytoplasmic portion of the chain corresponds to 288–318; it reads GNSKLRRASLKVLWTVMSILKGRKFQQHKQI.

Belongs to the G-protein coupled receptor T2R family.

It is found in the membrane. Its function is as follows. Gustducin-coupled receptor implicated in the perception of bitter compounds in the oral cavity and the gastrointestinal tract. Signals through PLCB2 and the calcium-regulated cation channel TRPM5. The protein is Taste receptor type 2 member 7 (TAS2R7) of Macaca mulatta (Rhesus macaque).